A 252-amino-acid polypeptide reads, in one-letter code: Triosephosphate isomerase (252 aa).

10 to 12 lines the substrate pocket; the sequence is NWK. The active-site Electrophile is His-96. The active-site Proton acceptor is the Glu-168. Substrate-binding positions include Gly-174, Ser-214, and 235–236; that span reads GG.

Belongs to the triosephosphate isomerase family. Homodimer.

The protein resides in the cytoplasm. It catalyses the reaction D-glyceraldehyde 3-phosphate = dihydroxyacetone phosphate. Its pathway is carbohydrate biosynthesis; gluconeogenesis. The protein operates within carbohydrate degradation; glycolysis; D-glyceraldehyde 3-phosphate from glycerone phosphate: step 1/1. Its function is as follows. Involved in the gluconeogenesis. Catalyzes stereospecifically the conversion of dihydroxyacetone phosphate (DHAP) to D-glyceraldehyde-3-phosphate (G3P). The polypeptide is Triosephosphate isomerase (Lactococcus lactis subsp. lactis (strain IL1403) (Streptococcus lactis)).